The primary structure comprises 874 residues: Alanine--tRNA ligase (874 aa).

4 residues coordinate Zn(2+): histidine 563, histidine 567, cysteine 665, and histidine 669.

Belongs to the class-II aminoacyl-tRNA synthetase family. The cofactor is Zn(2+).

Its subcellular location is the cytoplasm. It carries out the reaction tRNA(Ala) + L-alanine + ATP = L-alanyl-tRNA(Ala) + AMP + diphosphate. Functionally, catalyzes the attachment of alanine to tRNA(Ala) in a two-step reaction: alanine is first activated by ATP to form Ala-AMP and then transferred to the acceptor end of tRNA(Ala). Also edits incorrectly charged Ser-tRNA(Ala) and Gly-tRNA(Ala) via its editing domain. This Actinobacillus pleuropneumoniae serotype 7 (strain AP76) protein is Alanine--tRNA ligase.